A 67-amino-acid chain; its full sequence is Large ribosomal subunit protein bL35 (67 aa).

It belongs to the bacterial ribosomal protein bL35 family.

This Anaeromyxobacter sp. (strain Fw109-5) protein is Large ribosomal subunit protein bL35.